A 995-amino-acid polypeptide reads, in one-letter code: ATP-dependent RNA helicase DBP10 (995 aa).

The segment at 1–120 (MAGVQKRKRD…TQTGDDEDDV (120 aa)) is disordered. Acidic residues-rich tracts occupy residues 12-25 (EDQD…DDIA) and 37-50 (SESD…EVEA). A compositionally biased stretch (basic and acidic residues) spans 71–81 (VNNKKKAENKD). Ser-101 carries the post-translational modification Phosphoserine. The Q motif signature appears at 137–165 (GSFPSFGLSKIVLNNIKRKGFRQPTPIQR). The region spanning 168-340 (IPLILQSRDI…KAGLVNPVLV (173 aa)) is the Helicase ATP-binding domain. An ATP-binding site is contributed by 181–188 (ARTGSGKT). Positions 288-291 (DEAD) match the DEAD box motif. 2 disordered regions span residues 389-427 (LQNS…PAAN) and 889-973 (GSRE…EQIR). Phosphoserine is present on residues Ser-398 and Ser-400. Composition is skewed to basic residues over residues 407-422 (QKKR…RKQK) and 914-924 (VRGKFKHKQMK). The 151-residue stretch at 418-568 (FRKQKMPAAN…PMYDSLVDVM (151 aa)) folds into the Helicase C-terminal domain. The span at 964–973 (SELKSTEQIR) shows a compositional bias: basic and acidic residues.

Belongs to the DEAD box helicase family. DDX54/DBP10 subfamily. In terms of assembly, interacts with RRP1 and associates with pre-ribosomal particles.

Its subcellular location is the nucleus. The protein localises to the nucleolus. It carries out the reaction ATP + H2O = ADP + phosphate + H(+). Functionally, ATP-binding RNA helicase involved in the biogenesis of 60S ribosomal subunits and is required for the normal formation of 25S and 5.8S rRNAs. The polypeptide is ATP-dependent RNA helicase DBP10 (DBP10) (Saccharomyces cerevisiae (strain ATCC 204508 / S288c) (Baker's yeast)).